The chain runs to 505 residues: Alpha-1-syntrophin (505 aa).

Disordered regions lie at residues 1–25 and 40–77; these read MASG…GAGG and LTVS…PPQL. PH domains lie at 6 to 269 and 293 to 401; these read RAPR…AQVN and DIKQ…DGCH. One can recognise a PDZ domain in the interval 87–170; the sequence is RVTVRKADAG…EVVLEVKYMK (84 aa). Phosphoserine occurs at positions 101, 184, 189, 193, and 200. A disordered region spans residues 180 to 210; it reads TGGTSVGWDSPPASPLQRQPSSPGPTPRNFS. The region spanning 449–505 is the SU domain; the sequence is PFEKLQMSSDDGASLLFLDFGGAEGEIQLDLHSCPKTIVFIIHSFLSAKVTRLGLLA. The calmodulin-binding stretch occupies residues 483–505; that stretch reads PKTIVFIIHSFLSAKVTRLGLLA.

Belongs to the syntrophin family. In terms of assembly, monomer and homodimer. Interacts with the other members of the syntrophin family SNTB1 and SNTB2; SGCG and SGCA of the dystrophin glycoprotein complex; NOS1; GRB2; the sodium channel proteins SCN4A and SCN5A; F-actin and calmodulin. Interacts with dystrophin protein DMD and related proteins DTNA and UTRN and with MAPK12, TGFA and GA. Interacts with MYOC; regulates muscle hypertrophy. Interacts with DTNB. Post-translationally, phosphorylated by CaM-kinase II. Phosphorylation may inhibit the interaction with DMD. In terms of tissue distribution, high expression in skeletal muscle and heart. Low expression in brain, pancreas, liver, kidney and lung. Not detected in placenta.

The protein resides in the cell membrane. The protein localises to the sarcolemma. It is found in the cell junction. Its subcellular location is the cytoplasm. It localises to the cytoskeleton. Adapter protein that binds to and probably organizes the subcellular localization of a variety of membrane proteins. May link various receptors to the actin cytoskeleton and the extracellular matrix via the dystrophin glycoprotein complex. Plays an important role in synapse formation and in the organization of UTRN and acetylcholine receptors at the neuromuscular synapse. Binds to phosphatidylinositol 4,5-bisphosphate. The sequence is that of Alpha-1-syntrophin (SNTA1) from Homo sapiens (Human).